Here is a 137-residue protein sequence, read N- to C-terminus: Nucleoside diphosphate kinase (137 aa).

ATP is bound by residues lysine 9, phenylalanine 57, arginine 85, threonine 91, arginine 102, and asparagine 112. Histidine 115 acts as the Pros-phosphohistidine intermediate in catalysis.

Belongs to the NDK family. As to quaternary structure, homotetramer. It depends on Mg(2+) as a cofactor.

Its subcellular location is the cytoplasm. The catalysed reaction is a 2'-deoxyribonucleoside 5'-diphosphate + ATP = a 2'-deoxyribonucleoside 5'-triphosphate + ADP. The enzyme catalyses a ribonucleoside 5'-diphosphate + ATP = a ribonucleoside 5'-triphosphate + ADP. In terms of biological role, major role in the synthesis of nucleoside triphosphates other than ATP. The ATP gamma phosphate is transferred to the NDP beta phosphate via a ping-pong mechanism, using a phosphorylated active-site intermediate. This is Nucleoside diphosphate kinase from Campylobacter concisus (strain 13826).